Consider the following 306-residue polypeptide: uncharacterized protein (306 aa).

The stretch at 13 to 39 (NMLNEIAANNNLLNNKNNQTNQLNNNQ) forms a coiled coil. Disordered regions lie at residues 44–76 (YNNQNNNQNYPQNYPQNSQQNFQQNSQQNHQQN), 103–204 (DSKE…QSGQ), and 216–249 (QKQLDKNQPEKIPSKPEKNQKQSHKPKLPPTMQH). The span at 119 to 201 (HQQPIQNNPS…QFAQPNQYNQ (83 aa)) shows a compositional bias: low complexity. Over residues 218 to 235 (QLDKNQPEKIPSKPEKNQ) the composition is skewed to basic and acidic residues. Residues 279 to 299 (LFDYIIIPIALVLVFLFLVHP) traverse the membrane as a helical segment.

The protein localises to the membrane. This is an uncharacterized protein from Acanthamoeba polyphaga mimivirus (APMV).